The sequence spans 22 residues: Mu-conotoxin GIIIB (22 aa).

Disulfide bonds link C3-C15, C4-C20, and C10-C21. 2 positions are modified to 4-hydroxyproline; partial: P6 and P7. The residue at position 17 (P17) is a 4-hydroxyproline. Position 22 is an alanine amide (A22).

It belongs to the conotoxin M superfamily. Expressed by the venom duct.

It is found in the secreted. In terms of biological role, mu-conotoxins block voltage-gated sodium channels (Nav). This Conus geographus (Geography cone) protein is Mu-conotoxin GIIIB.